The following is a 272-amino-acid chain: Phosphoglycolate phosphatase (272 aa).

D19 acts as the Nucleophile in catalysis. Mg(2+) contacts are provided by D19, D21, and D182.

This sequence belongs to the HAD-like hydrolase superfamily. CbbY/CbbZ/Gph/YieH family. Mg(2+) is required as a cofactor.

It catalyses the reaction 2-phosphoglycolate + H2O = glycolate + phosphate. It participates in organic acid metabolism; glycolate biosynthesis; glycolate from 2-phosphoglycolate: step 1/1. Functionally, specifically catalyzes the dephosphorylation of 2-phosphoglycolate. Is involved in the dissimilation of the intracellular 2-phosphoglycolate formed during the DNA repair of 3'-phosphoglycolate ends, a major class of DNA lesions induced by oxidative stress. The chain is Phosphoglycolate phosphatase from Pseudomonas fluorescens (strain ATCC BAA-477 / NRRL B-23932 / Pf-5).